The primary structure comprises 111 residues: UPF0122 protein LACR_1522 (111 aa).

It belongs to the UPF0122 family.

Functionally, might take part in the signal recognition particle (SRP) pathway. This is inferred from the conservation of its genetic proximity to ftsY/ffh. May be a regulatory protein. The protein is UPF0122 protein LACR_1522 of Lactococcus lactis subsp. cremoris (strain SK11).